The chain runs to 1438 residues: DNA polymerase III PolC-type (1438 aa).

One can recognise an Exonuclease domain in the interval 422–578 (YVVFDVETTG…YDTEATAYIF (157 aa)).

The protein belongs to the DNA polymerase type-C family. PolC subfamily.

Its subcellular location is the cytoplasm. It catalyses the reaction DNA(n) + a 2'-deoxyribonucleoside 5'-triphosphate = DNA(n+1) + diphosphate. In terms of biological role, required for replicative DNA synthesis. This DNA polymerase also exhibits 3' to 5' exonuclease activity. The chain is DNA polymerase III PolC-type from Staphylococcus epidermidis (strain ATCC 35984 / DSM 28319 / BCRC 17069 / CCUG 31568 / BM 3577 / RP62A).